A 194-amino-acid polypeptide reads, in one-letter code: SRP-independent targeting protein 3 homolog (194 aa).

A run of 2 helical transmembrane segments spans residues 43-63 and 110-130; these read ILYATVNIVQIGIFLYTKIII and LVTIATTLFMHLYMGYAPPLL.

Belongs to the PHO88 family.

The protein resides in the endoplasmic reticulum membrane. In terms of biological role, may function in a SRP (signal recognition particle) and GET (guided entry of tail-anchored proteins) independent pathway for targeting a broad range of substrate proteins to the endoplasmic reticulum. Involved in inorganic phosphate uptake. Also involved in telomere length regulation and maintenance. The chain is SRP-independent targeting protein 3 homolog from Schizosaccharomyces pombe (strain 972 / ATCC 24843) (Fission yeast).